Reading from the N-terminus, the 185-residue chain is Gastrokine-1 (185 aa).

The signal sequence occupies residues Met-1–Ala-20. The 97-residue stretch at Asn-54 to Ala-150 folds into the BRICHOS domain. Residues Cys-81 and Cys-142 are joined by a disulfide bond.

The protein belongs to the gastrokine family. Highly expressed specifically in surface cells of the antrum mucosa from where it is secreted.

It localises to the secreted. The protein localises to the cytoplasmic granule. It is found in the golgi apparatus. In terms of biological role, has mitogenic activity and may be involved in maintaining the integrity of the gastric mucosal epithelium. The sequence is that of Gastrokine-1 (GKN1) from Sus scrofa (Pig).